The chain runs to 147 residues: Large ribosomal subunit protein uL11 (147 aa).

Belongs to the universal ribosomal protein uL11 family. Part of the ribosomal stalk of the 50S ribosomal subunit. Interacts with L10 and the large rRNA to form the base of the stalk. L10 forms an elongated spine to which L12 dimers bind in a sequential fashion forming a multimeric L10(L12)X complex. In terms of processing, one or more lysine residues are methylated.

Functionally, forms part of the ribosomal stalk which helps the ribosome interact with GTP-bound translation factors. In Sorangium cellulosum (strain So ce56) (Polyangium cellulosum (strain So ce56)), this protein is Large ribosomal subunit protein uL11.